We begin with the raw amino-acid sequence, 513 residues long: GMP synthase [glutamine-hydrolyzing] (513 aa).

The region spanning 5 to 196 (QILILDFGSQ…LYDIAKCNKD (192 aa)) is the Glutamine amidotransferase type-1 domain. C83 serves as the catalytic Nucleophile. Catalysis depends on residues H170 and E172. A GMPS ATP-PPase domain is found at 197-388 (WNLDDFIDQQ…LGLPEEMINR (192 aa)). 224–230 (SGGVDSS) provides a ligand contact to ATP.

In terms of assembly, homodimer.

It carries out the reaction XMP + L-glutamine + ATP + H2O = GMP + L-glutamate + AMP + diphosphate + 2 H(+). It participates in purine metabolism; GMP biosynthesis; GMP from XMP (L-Gln route): step 1/1. Functionally, catalyzes the synthesis of GMP from XMP. In Mesoplasma florum (strain ATCC 33453 / NBRC 100688 / NCTC 11704 / L1) (Acholeplasma florum), this protein is GMP synthase [glutamine-hydrolyzing].